Consider the following 247-residue polypeptide: Protein GrpE (247 aa).

A compositionally biased stretch (basic and acidic residues) spans 31 to 49 (QKEETKTTNKDNQKEDETV). A disordered region spans residues 31 to 79 (QKEETKTTNKDNQKEDETVKNQSNQSNQSNQTKQTNTKQQKHQPKENSH). Residues 50-68 (KNQSNQSNQSNQTKQTNTK) are compositionally biased toward low complexity.

The protein belongs to the GrpE family. Homodimer.

The protein resides in the cytoplasm. Functionally, participates actively in the response to hyperosmotic and heat shock by preventing the aggregation of stress-denatured proteins, in association with DnaK and GrpE. It is the nucleotide exchange factor for DnaK and may function as a thermosensor. Unfolded proteins bind initially to DnaJ; upon interaction with the DnaJ-bound protein, DnaK hydrolyzes its bound ATP, resulting in the formation of a stable complex. GrpE releases ADP from DnaK; ATP binding to DnaK triggers the release of the substrate protein, thus completing the reaction cycle. Several rounds of ATP-dependent interactions between DnaJ, DnaK and GrpE are required for fully efficient folding. In Onion yellows phytoplasma (strain OY-M), this protein is Protein GrpE.